The following is an 838-amino-acid chain: Rho GTPase-activating protein 12 (838 aa).

The SH3 domain maps to 10–72 (AGQAYIEVEY…PAQYVKEVTR (63 aa)). Composition is skewed to polar residues over residues 155 to 172 (GKFNSDSHSPKVSSQNRT) and 189 to 198 (TSFSQEQSCD). The segment at 155 to 239 (GKFNSDSHSP…PPNQGRPDSP (85 aa)) is disordered. The residue at position 163 (S163) is a Phosphoserine. 3 positions are modified to phosphoserine: S199, S211, and S213. T228 and T229 each carry phosphothreonine. Phosphoserine is present on S238. The residue at position 241 (Y241) is a Phosphotyrosine. The 34-residue stretch at 263 to 296 (IQVNGEWETHKDSSGRCYYYNRTTQERTWKPPRW) folds into the WW 1 domain. Over residues 291-302 (WKPPRWARDVST) the composition is skewed to basic and acidic residues. A disordered region spans residues 291 to 346 (WKPPRWARDVSTSRDFQSPGEQEPLSSEENYHSSCFSQSDSQCGSPPRGWSEELDE). The segment covering 303 to 334 (SRDFQSPGEQEPLSSEENYHSSCFSQSDSQCG) has biased composition (polar residues). The WW 2 domain maps to 355-388 (DYTKEKWLKHVDDQGRQYYYSADGSRSEWELPKY). A disordered region spans residues 425-456 (DSNDKDSPTTTKLCLPENESPPTSSKHQDPGQ). One can recognise a PH domain in the interval 466 to 567 (KITENGKKVR…WFKVLSSTIN (102 aa)). The segment covering 572–582 (EADEAAEEETP) has biased composition (acidic residues). The disordered stretch occupies residues 572-620 (EADEAAEEETPDSPGVEKHDKEKDQKELKKLRSMKGSSMDSSEQKKTKK). Residue S584 is modified to Phosphoserine. Over residues 586-601 (GVEKHDKEKDQKELKK) the composition is skewed to basic and acidic residues. The region spanning 648 to 836 (SNLANLCQRE…LILLELSTVF (189 aa)) is the Rho-GAP domain.

Its function is as follows. GTPase activator for the Rho-type GTPases by converting them to an inactive GDP-bound state. The polypeptide is Rho GTPase-activating protein 12 (Arhgap12) (Mus musculus (Mouse)).